We begin with the raw amino-acid sequence, 546 residues long: Flavin-dependent oxygenase ucdF (546 aa).

One can recognise an FAD-binding PCMH-type domain in the interval 81-263; the sequence is QGRIPYYAVM…VNTTIRTFPD (183 aa).

Belongs to the oxygen-dependent FAD-linked oxidoreductase family.

In terms of biological role, nonribosomal peptide synthetase that mediates the biosynthesis of usterphenyllins and uscandidusins, p-terphenyl derivatives. The function of ucdF within the pathway still remains to be determined. UcdE further prenylates position C-14 of ring C of usterphenyllin B to form usterphenyllin A. The pathway begin with the biosynthesis of 4-hydroxyphenylpyruvate (HPPA) from L-tyrosine, possibly by the aminotransferase ucdG. The nonribosomal peptide synthetase ucdA then condenses two HPPA units to produce atromentin. The key step in this pathway is the reduction and dehydration of atromentin to form a terphenyl triol intermediate, performed by the NAD-dependent dehydrogenase ucdB. Further O-methylation by the methyltransferase ucdC forms terphenyllin carrying two methoxy moieties at C-9 and C-12, and subsequent dihydroxylation at C-3 of ring A and C-15 of ring C by the flavin-dependent oxygenase ucdD leads to 3,15-dihydroxyterphenyllin. Prenylation by ucdE at position C-5 of ring A forms usterphenyllin B, and is followed by a second prenylation at position C-14 of ring C to form usterphenyllin A. The following furan ring formation that leads to uscandidusins A and B was proven to be an unexpected spontaneous non-enzymatic reaction. In Aspergillus ustus, this protein is Flavin-dependent oxygenase ucdF.